Consider the following 374-residue polypeptide: DNA replication and repair protein RecF (374 aa).

An ATP-binding site is contributed by 34-41; the sequence is GDNGAGKT.

The protein belongs to the RecF family.

It localises to the cytoplasm. Functionally, the RecF protein is involved in DNA metabolism; it is required for DNA replication and normal SOS inducibility. RecF binds preferentially to single-stranded, linear DNA. It also seems to bind ATP. The sequence is that of DNA replication and repair protein RecF from Rhizobium leguminosarum bv. trifolii (strain WSM2304).